We begin with the raw amino-acid sequence, 309 residues long: Aspartate carbamoyltransferase catalytic subunit (309 aa).

Positions 57 and 58 each coordinate carbamoyl phosphate. Residue Lys86 participates in L-aspartate binding. 3 residues coordinate carbamoyl phosphate: Arg107, His135, and Gln138. The L-aspartate site is built by Arg168 and Arg228. Carbamoyl phosphate-binding residues include Leu267 and Pro268.

The protein belongs to the aspartate/ornithine carbamoyltransferase superfamily. ATCase family. Heterooligomer of catalytic and regulatory chains.

It carries out the reaction carbamoyl phosphate + L-aspartate = N-carbamoyl-L-aspartate + phosphate + H(+). The protein operates within pyrimidine metabolism; UMP biosynthesis via de novo pathway; (S)-dihydroorotate from bicarbonate: step 2/3. Its function is as follows. Catalyzes the condensation of carbamoyl phosphate and aspartate to form carbamoyl aspartate and inorganic phosphate, the committed step in the de novo pyrimidine nucleotide biosynthesis pathway. The polypeptide is Aspartate carbamoyltransferase catalytic subunit (Nitrosopumilus maritimus (strain SCM1)).